We begin with the raw amino-acid sequence, 841 residues long: ATP-dependent helicase Lhr-Core (841 aa).

Residues Gln39, Lys62, Thr63, Asp181, Glu182, Ile352, Arg369, and His372 each coordinate ATP. A Helicase ATP-binding domain is found at 43–234; it reads IKEIHEGKNV…FLVGNGRDCY (192 aa). The DEVH box motif lies at 181 to 184; the sequence is DEIH. The 151-residue stretch at 266–416 folds into the Helicase C-terminal domain; the sequence is RLYNLLKKLI…RIHIPKNCLD (151 aa). The interval 417-500 is WH domain; it reads VLAQHLVGMA…IYYMNVGTIP (84 aa). The domain 4 stretch occupies residues 501-841; it reads DETAVDVIAD…MEFISMKGKK (341 aa).

This sequence belongs to the Lhr helicase family. Lhr-Core subfamily. As to quaternary structure, monomer.

The catalysed reaction is Couples ATP hydrolysis with the unwinding of duplex DNA by translocating in the 3'-5' direction.. It catalyses the reaction ATP + H2O = ADP + phosphate + H(+). In terms of biological role, DNA helicase that loads on single-stranded (ss)DNA and translocates in a 3'-5' direction, probably involved in DNA repair. Archaeal orthologs have double-stranded (ds)DNA and/or RNA:DNA helicase activity. The polypeptide is ATP-dependent helicase Lhr-Core (Methanocaldococcus jannaschii (strain ATCC 43067 / DSM 2661 / JAL-1 / JCM 10045 / NBRC 100440) (Methanococcus jannaschii)).